We begin with the raw amino-acid sequence, 1178 residues long: Dual specificity mitogen-activated protein kinase kinase hemipterous (1178 aa).

Disordered stretches follow at residues 74 to 103 (SGSG…SSSS) and 115 to 148 (ATGT…GGGL). Composition is skewed to low complexity over residues 91–103 (ATPF…SSSS) and 115–128 (ATGT…PPTT). A Protein kinase domain is found at 197-456 (LKHLGDLGNG…YPELLAQPFI (260 aa)). Residues 203-211 (LGNGTSGNV) and K226 contribute to the ATP site. D320 acts as the Proton acceptor in catalysis. At S348 the chain carries Phosphoserine. T352 carries the post-translational modification Phosphothreonine. The segment at 522 to 648 (TYAGQSPTNP…DESPKKESMF (127 aa)) is disordered. The segment covering 523–543 (YAGQSPTNPQKTIKPTQIPSY) has biased composition (polar residues). Residues 544–570 (QQQQSQFFMQSATQLPQTTTTTPTATT) show a composition bias toward low complexity. Over residues 574 to 593 (GGSGNGNGRGNGSGGSGNGS) the composition is skewed to gly residues. A compositionally biased stretch (low complexity) spans 594–608 (GSSSSASPLSPPSAG). Over residues 636-646 (KYNDESPKKES) the composition is skewed to basic and acidic residues. Residues S646 and S662 each carry the phosphoserine modification. Disordered stretches follow at residues 715–783 (TTTP…LQPG), 797–851 (QNQL…STCS), 912–933 (GTSP…GNGN), 999–1026 (TSPV…VVNN), 1042–1108 (SSSS…NRGQ), and 1122–1178 (GQPP…TIDQ). Residues 724 to 734 (TENSQAYDSCD) show a composition bias toward polar residues. Low complexity-rich tracts occupy residues 735–783 (SSSN…LQPG), 808–817 (RYQQQRQQPP), and 837–851 (THST…STCS). Over residues 912–928 (GTSPTLQSRSPEQQSDY) the composition is skewed to polar residues. Residues 1042–1055 (SSSSNTSQSTSPTT) are compositionally biased toward low complexity. S1150 and S1154 each carry phosphoserine. Residues 1168–1178 (PQRRIYRTIDQ) are compositionally biased toward basic and acidic residues.

It belongs to the protein kinase superfamily. STE Ser/Thr protein kinase family. MAP kinase kinase subfamily. Post-translationally, MAPKK is itself dependent on Ser/Thr phosphorylation for activity catalyzed by MAP kinase kinase kinases. Weakly autophosphorylated.

The enzyme catalyses L-seryl-[protein] + ATP = O-phospho-L-seryl-[protein] + ADP + H(+). It carries out the reaction L-threonyl-[protein] + ATP = O-phospho-L-threonyl-[protein] + ADP + H(+). The catalysed reaction is L-tyrosyl-[protein] + ATP = O-phospho-L-tyrosyl-[protein] + ADP + H(+). In terms of biological role, required for the epithelial cell sheet movement called dorsal closure (DC), which allows establishment of the dorsal epidermis. Controls the expression in the dorsal epithelium edges of another dorsal closure gene, puckered (puc). Phosphorylates and activates the MAP kinase bsk; bsk signal transduction pathway mediates an immune response and morphogenesis. This chain is Dual specificity mitogen-activated protein kinase kinase hemipterous (hep), found in Drosophila melanogaster (Fruit fly).